A 185-amino-acid chain; its full sequence is DNA-directed RNA polymerase 22 kDa subunit (185 aa).

This sequence belongs to the poxviridae DNA-directed RNA polymerase 22 kDa subunit family. The DNA-dependent RNA polymerase used for intermediate and late genes expression consists of eight subunits Rpo30/OPG66, Rpo7/OPG90, Rpo22/OPG103, Rpo147/OPG105, Rpo18/OPG119, Rpo19/OPG131, Rpo132/OPG151 and Rpo35/OPG156. The same holoenzyme, with the addition of the transcription-specificity factor OPG109, is used for early gene expression.

It is found in the virion. It catalyses the reaction RNA(n) + a ribonucleoside 5'-triphosphate = RNA(n+1) + diphosphate. Part of the DNA-dependent RNA polymerase which catalyzes the transcription of viral DNA into RNA using the four ribonucleoside triphosphates as substrates. Responsible for the transcription of early, intermediate and late genes. DNA-dependent RNA polymerase associates with the early transcription factor (ETF), itself composed of OPG118 and OPG133, thereby allowing the early genes transcription. Late transcription, and probably also intermediate transcription, require newly synthesized RNA polymerase. This Cynomys gunnisoni (Gunnison's prairie dog) protein is DNA-directed RNA polymerase 22 kDa subunit (OPG103).